Reading from the N-terminus, the 335-residue chain is Phosphate acyltransferase (335 aa).

It belongs to the PlsX family. In terms of assembly, homodimer. Probably interacts with PlsY.

It localises to the cytoplasm. The catalysed reaction is a fatty acyl-[ACP] + phosphate = an acyl phosphate + holo-[ACP]. It functions in the pathway lipid metabolism; phospholipid metabolism. In terms of biological role, catalyzes the reversible formation of acyl-phosphate (acyl-PO(4)) from acyl-[acyl-carrier-protein] (acyl-ACP). This enzyme utilizes acyl-ACP as fatty acyl donor, but not acyl-CoA. The chain is Phosphate acyltransferase from Alkaliphilus oremlandii (strain OhILAs) (Clostridium oremlandii (strain OhILAs)).